A 314-amino-acid polypeptide reads, in one-letter code: UDP-N-acetylenolpyruvoylglucosamine reductase (314 aa).

In terms of domain architecture, FAD-binding PCMH-type spans 31 to 208; that stretch reads RIGGPADYYA…LSARFRLTPK (178 aa). The active site involves R187. S237 functions as the Proton donor in the catalytic mechanism. E307 is an active-site residue.

It belongs to the MurB family. FAD serves as cofactor.

The protein localises to the cytoplasm. It catalyses the reaction UDP-N-acetyl-alpha-D-muramate + NADP(+) = UDP-N-acetyl-3-O-(1-carboxyvinyl)-alpha-D-glucosamine + NADPH + H(+). Its pathway is cell wall biogenesis; peptidoglycan biosynthesis. In terms of biological role, cell wall formation. This chain is UDP-N-acetylenolpyruvoylglucosamine reductase, found in Agathobacter rectalis (strain ATCC 33656 / DSM 3377 / JCM 17463 / KCTC 5835 / VPI 0990) (Eubacterium rectale).